Reading from the N-terminus, the 119-residue chain is Large ribosomal subunit protein bL20 (119 aa).

It belongs to the bacterial ribosomal protein bL20 family.

Its function is as follows. Binds directly to 23S ribosomal RNA and is necessary for the in vitro assembly process of the 50S ribosomal subunit. It is not involved in the protein synthesizing functions of that subunit. The chain is Large ribosomal subunit protein bL20 from Thermoanaerobacter sp. (strain X514).